Consider the following 569-residue polypeptide: Urease subunit alpha (569 aa).

One can recognise a Urease domain in the interval 131 to 569 (GGFDSHIHFI…LPMAQRYFLF (439 aa)). Residues H136, H138, and K219 each coordinate Ni(2+). An N6-carboxylysine modification is found at K219. H221 serves as a coordination point for substrate. H248 and H274 together coordinate Ni(2+). H322 functions as the Proton donor in the catalytic mechanism. D362 contributes to the Ni(2+) binding site.

It belongs to the metallo-dependent hydrolases superfamily. Urease alpha subunit family. As to quaternary structure, heterotrimer of UreA (gamma), UreB (beta) and UreC (alpha) subunits. Three heterotrimers associate to form the active enzyme. Ni cation serves as cofactor. Post-translationally, carboxylation allows a single lysine to coordinate two nickel ions.

It is found in the cytoplasm. The enzyme catalyses urea + 2 H2O + H(+) = hydrogencarbonate + 2 NH4(+). It participates in nitrogen metabolism; urea degradation; CO(2) and NH(3) from urea (urease route): step 1/1. The sequence is that of Urease subunit alpha from Ruegeria pomeroyi (strain ATCC 700808 / DSM 15171 / DSS-3) (Silicibacter pomeroyi).